The sequence spans 208 residues: Small ribosomal subunit protein uS4 (208 aa).

The disordered stretch occupies residues G24–E52. The region spanning S98–A160 is the S4 RNA-binding domain.

The protein belongs to the universal ribosomal protein uS4 family. In terms of assembly, part of the 30S ribosomal subunit. Contacts protein S5. The interaction surface between S4 and S5 is involved in control of translational fidelity.

One of the primary rRNA binding proteins, it binds directly to 16S rRNA where it nucleates assembly of the body of the 30S subunit. Its function is as follows. With S5 and S12 plays an important role in translational accuracy. This is Small ribosomal subunit protein uS4 from Acinetobacter baumannii (strain ACICU).